We begin with the raw amino-acid sequence, 122 residues long: Short coiled-coil protein (122 aa).

The tract at residues 1–26 (MDGLNTGEEEDSAFTSISLTDDTDHS) is disordered. Residues 43 to 101 (NADMDAVDAENQVELEEKTRLINQVLELQHTLEDLSARVDAVKEENLKLKSENQVLGQY) adopt a coiled-coil conformation.

This sequence belongs to the SCOC family. Homodimer. Interacts with ARL1, ARL2 and ARL3. Directly interacts with FEZ1 and UVRAG. The interaction with UVRAG is reduced by amino acid starvation, but the complex is stabilized in the presence of FEZ1. Interacts with NRBF2.

It localises to the golgi apparatus membrane. The protein resides in the golgi apparatus. It is found in the trans-Golgi network. The protein localises to the cytoplasm. Its subcellular location is the cytosol. Positive regulator of amino acid starvation-induced autophagy. The chain is Short coiled-coil protein (Scoc) from Rattus norvegicus (Rat).